We begin with the raw amino-acid sequence, 176 residues long: MLVPPINLHAWVEQHRHLLKPPVGNKCIQQDGFIIMIVGGPNARTDYHYDEGPEWFFQLEGEMVLKVQDDGTARDIPIRAGEIFLLPPKVPHSPQRAAGSIGLVIERERLPHEQDGLQWYCPQCNHKLYEAMFPLENIETDFPPVFDHFYRSLALRTCTQCGHVHPAPERYAAVEA.

O2 is bound at residue Arg-44. Fe cation is bound by residues His-48, Glu-54, and His-92. Glu-54 serves as a coordination point for substrate. The substrate site is built by Arg-96 and Glu-106. The Fe cation site is built by Cys-121, Cys-124, Cys-158, and Cys-161.

The protein belongs to the 3-HAO family. As to quaternary structure, homodimer. Fe(2+) is required as a cofactor.

It carries out the reaction 3-hydroxyanthranilate + O2 = (2Z,4Z)-2-amino-3-carboxymuconate 6-semialdehyde. It functions in the pathway cofactor biosynthesis; NAD(+) biosynthesis; quinolinate from L-kynurenine: step 3/3. In terms of biological role, catalyzes the oxidative ring opening of 3-hydroxyanthranilate to 2-amino-3-carboxymuconate semialdehyde, which spontaneously cyclizes to quinolinate. In Xanthomonas campestris pv. campestris (strain 8004), this protein is 3-hydroxyanthranilate 3,4-dioxygenase.